We begin with the raw amino-acid sequence, 79 residues long: Sec-independent protein translocase protein TatA (79 aa).

Residues 1–21 (MGSLSIWHWIVVIAVILLLFG) form a helical membrane-spanning segment. Positions 43 to 60 (MQDDEKTAEKPEPVKTID) are enriched in basic and acidic residues. The disordered stretch occupies residues 43–79 (MQDDEKTAEKPEPVKTIDHNAPAPGASRSDVGSKTTV).

Belongs to the TatA/E family. The Tat system comprises two distinct complexes: a TatABC complex, containing multiple copies of TatA, TatB and TatC subunits, and a separate TatA complex, containing only TatA subunits. Substrates initially bind to the TatABC complex, which probably triggers association of the separate TatA complex to form the active translocon.

It localises to the cell inner membrane. Functionally, part of the twin-arginine translocation (Tat) system that transports large folded proteins containing a characteristic twin-arginine motif in their signal peptide across membranes. TatA could form the protein-conducting channel of the Tat system. The polypeptide is Sec-independent protein translocase protein TatA (Nitrobacter hamburgensis (strain DSM 10229 / NCIMB 13809 / X14)).